A 309-amino-acid polypeptide reads, in one-letter code: MTQQPLRGVTSLHFNQDQSCFCCAMETGVRIYNVEPLMEKGHLDHEQVGSVGLVEMLHRSNLLALVGGGSSPKFSEISVLIWDDAREGKDSKDKLVLEFTFTKPVLAVRMRHDKIVIVLRNRIYVYSFPDNPRKLFEFDTRDNPKGLCDLCPSLEKQLLVFPGHKCGSLQLVSKEKLVELRRGTDPATLYCINFSHDSSFLCASSDKGTVHIFALKDTRLNRRSALARVGKVGPMIGQYVDSQWSLASFTVPAESACICAFGRNTSKNVNSVIAICVDGTFHKYVFTPDGNCNREAFDVYLDICDDDDF.

The WD 1 repeat unit spans residues 4–42 (QPLRGVTSLHFNQDQSCFCCAMETGVRIYNVEPLMEKGH). The short motif at 180-183 (LRRG) is the L/FRRG motif element. The WD 2 repeat unit spans residues 184-223 (TDPATLYCINFSHDSSFLCASSDKGTVHIFALKDTRLNRR).

Belongs to the WD repeat PROPPIN family. As to quaternary structure, interacts with WIPI1. Interacts with WIPI2. Interacts with ATG2A and ATG2B. Interacts with ULK1. May interact with the PRKAA1, PRKAA2, PRKAB1 and PRKAG1 subunits of the AMPK kinase. May interact with NUDC.

It localises to the preautophagosomal structure. It is found in the cytoplasm. Component of the autophagy machinery that controls the major intracellular degradation process by which cytoplasmic materials are packaged into autophagosomes and delivered to lysosomes for degradation. Binds phosphatidylinositol 3-phosphate (PtdIns3P). Activated by the STK11/AMPK signaling pathway upon starvation, WDR45 is involved in autophagosome assembly downstream of WIPI2, regulating the size of forming autophagosomes. Together with WIPI1, promotes ATG2 (ATG2A or ATG2B)-mediated lipid transfer by enhancing ATG2-association with phosphatidylinositol 3-monophosphate (PI3P)-containing membranes. Probably recruited to membranes through its PtdIns3P activity. The protein is WD repeat domain phosphoinositide-interacting protein 4 (Wdr45) of Rattus norvegicus (Rat).